Here is a 278-residue protein sequence, read N- to C-terminus: 4-hydroxy-3-methylbut-2-enyl diphosphate reductase (278 aa).

C12 serves as a coordination point for [4Fe-4S] cluster. (2E)-4-hydroxy-3-methylbut-2-enyl diphosphate-binding residues include H40 and H75. Dimethylallyl diphosphate is bound by residues H40 and H75. H40 and H75 together coordinate isopentenyl diphosphate. [4Fe-4S] cluster is bound at residue C97. H125 is a (2E)-4-hydroxy-3-methylbut-2-enyl diphosphate binding site. H125 serves as a coordination point for dimethylallyl diphosphate. An isopentenyl diphosphate-binding site is contributed by H125. E127 acts as the Proton donor in catalysis. T157 is a binding site for (2E)-4-hydroxy-3-methylbut-2-enyl diphosphate. Position 187 (C187) interacts with [4Fe-4S] cluster. Residues S215, S216, N217, and S258 each contribute to the (2E)-4-hydroxy-3-methylbut-2-enyl diphosphate site. Residues S215, S216, N217, and S258 each coordinate dimethylallyl diphosphate. Residues S215, S216, N217, and S258 each contribute to the isopentenyl diphosphate site.

The protein belongs to the IspH family. [4Fe-4S] cluster serves as cofactor.

The enzyme catalyses isopentenyl diphosphate + 2 oxidized [2Fe-2S]-[ferredoxin] + H2O = (2E)-4-hydroxy-3-methylbut-2-enyl diphosphate + 2 reduced [2Fe-2S]-[ferredoxin] + 2 H(+). It carries out the reaction dimethylallyl diphosphate + 2 oxidized [2Fe-2S]-[ferredoxin] + H2O = (2E)-4-hydroxy-3-methylbut-2-enyl diphosphate + 2 reduced [2Fe-2S]-[ferredoxin] + 2 H(+). It participates in isoprenoid biosynthesis; dimethylallyl diphosphate biosynthesis; dimethylallyl diphosphate from (2E)-4-hydroxy-3-methylbutenyl diphosphate: step 1/1. It functions in the pathway isoprenoid biosynthesis; isopentenyl diphosphate biosynthesis via DXP pathway; isopentenyl diphosphate from 1-deoxy-D-xylulose 5-phosphate: step 6/6. Its function is as follows. Catalyzes the conversion of 1-hydroxy-2-methyl-2-(E)-butenyl 4-diphosphate (HMBPP) into a mixture of isopentenyl diphosphate (IPP) and dimethylallyl diphosphate (DMAPP). Acts in the terminal step of the DOXP/MEP pathway for isoprenoid precursor biosynthesis. The chain is 4-hydroxy-3-methylbut-2-enyl diphosphate reductase from Pseudothermotoga lettingae (strain ATCC BAA-301 / DSM 14385 / NBRC 107922 / TMO) (Thermotoga lettingae).